The chain runs to 924 residues: Exocyst complex component 2 (924 aa).

Positions 8 to 93 (PLVTGISPNE…GTSTVSFKLL (86 aa)) constitute an IPT/TIG domain. A coiled-coil region spans residues 240–260 (QKLENVLNRASNTADTLFQEV). Phosphoserine is present on residues serine 431, serine 432, and serine 435. Threonine 440 is subject to Phosphothreonine. Position 454 is an N6-acetyllysine (lysine 454). Position 888 is a phosphoserine (serine 888).

The protein belongs to the SEC5 family. As to quaternary structure, the exocyst complex is composed of EXOC1, EXOC2, EXOC3, EXOC4, EXOC5, EXOC6, EXOC7 and EXOC8. Interacts with EXOC3L1. Interacts with GNEFR/DELGEF; this interaction occurs only in the presence of magnesium or manganese and is stimulated by dCTP or GTP. Interacts with RALA and RALB. Interacts with ARL13B; regulates ARL13B localization to the cilium membrane. Widely expressed with highest levels in brain and placenta.

The protein localises to the midbody. The protein resides in the midbody ring. Functionally, component of the exocyst complex involved in the docking of exocytic vesicles with fusion sites on the plasma membrane. The polypeptide is Exocyst complex component 2 (EXOC2) (Homo sapiens (Human)).